The primary structure comprises 373 residues: Chorismate synthase (373 aa).

Arg46 serves as a coordination point for NADP(+). FMN contacts are provided by residues 123–125, 251–252, Gly295, 310–314, and Arg337; these read RSS, NA, and KPTPS.

It belongs to the chorismate synthase family. FMNH2 is required as a cofactor.

The enzyme catalyses 5-O-(1-carboxyvinyl)-3-phosphoshikimate = chorismate + phosphate. It functions in the pathway metabolic intermediate biosynthesis; chorismate biosynthesis; chorismate from D-erythrose 4-phosphate and phosphoenolpyruvate: step 7/7. Functionally, catalyzes the anti-1,4-elimination of the C-3 phosphate and the C-6 proR hydrogen from 5-enolpyruvylshikimate-3-phosphate (EPSP) to yield chorismate, which is the branch point compound that serves as the starting substrate for the three terminal pathways of aromatic amino acid biosynthesis. This reaction introduces a second double bond into the aromatic ring system. This Methanococcus maripaludis (strain C5 / ATCC BAA-1333) protein is Chorismate synthase.